The sequence spans 238 residues: Dephospho-CoA kinase (238 aa).

The DPCK domain maps to 3 to 233 (IIGLTGGVGT…QRPFASPPRA (231 aa)). ATP is bound at residue 11-16 (GTGKST). Disordered regions lie at residues 110–129 (HGVPLEEEPASQKRSGVGFS) and 219–238 (LASAGQRPFASPPRAGYSDG).

Belongs to the CoaE family.

The protein resides in the cytoplasm. It carries out the reaction 3'-dephospho-CoA + ATP = ADP + CoA + H(+). It participates in cofactor biosynthesis; coenzyme A biosynthesis; CoA from (R)-pantothenate: step 5/5. Its function is as follows. Catalyzes the phosphorylation of the 3'-hydroxyl group of dephosphocoenzyme A to form coenzyme A. This chain is Dephospho-CoA kinase, found in Synechococcus sp. (strain JA-2-3B'a(2-13)) (Cyanobacteria bacterium Yellowstone B-Prime).